A 513-amino-acid chain; its full sequence is ATP synthase subunit alpha (513 aa).

169 to 176 (GDRQTGKT) contacts ATP.

This sequence belongs to the ATPase alpha/beta chains family. In terms of assembly, F-type ATPases have 2 components, CF(1) - the catalytic core - and CF(0) - the membrane proton channel. CF(1) has five subunits: alpha(3), beta(3), gamma(1), delta(1), epsilon(1). CF(0) has three main subunits: a(1), b(2) and c(9-12). The alpha and beta chains form an alternating ring which encloses part of the gamma chain. CF(1) is attached to CF(0) by a central stalk formed by the gamma and epsilon chains, while a peripheral stalk is formed by the delta and b chains.

Its subcellular location is the cell inner membrane. It carries out the reaction ATP + H2O + 4 H(+)(in) = ADP + phosphate + 5 H(+)(out). Produces ATP from ADP in the presence of a proton gradient across the membrane. The alpha chain is a regulatory subunit. This Haemophilus influenzae (strain PittGG) protein is ATP synthase subunit alpha.